The sequence spans 95 residues: Synaptobrevin-A (95 aa).

Over 1–70 (MSEPVNKVKQ…KRLMWCRNIK (70 aa)) the chain is Cytoplasmic. One can recognise a v-SNARE coiled-coil homology domain in the interval 7–67 (KVKQTQQQVD…NEIKRLMWCR (61 aa)). A helical; Anchor for type IV membrane protein transmembrane segment spans residues 71–91 (LTLIIIAVVVLLLVVIIVPIV). Residues 92 to 95 (LKFT) lie on the Vesicular side of the membrane.

It belongs to the synaptobrevin family.

It is found in the cytoplasmic vesicle. The protein resides in the secretory vesicle membrane. Involved in the targeting and/or fusion of transport vesicles to their target membrane. This chain is Synaptobrevin-A (sybA), found in Dictyostelium discoideum (Social amoeba).